The following is a 146-amino-acid chain: Hemoglobin subunit beta (146 aa).

The residue at position 1 (Val1) is an N-acetylvaline. The Globin domain maps to 2 to 146; sequence HLTDAEKAAI…VASALAHKYH (145 aa). Position 63 (His63) interacts with heme b. Lys82 carries the post-translational modification N6-acetyllysine. His92 provides a ligand contact to heme b. Residue Cys93 is modified to S-nitrosocysteine. Lys144 carries the post-translational modification N6-acetyllysine.

Belongs to the globin family. As to quaternary structure, heterotetramer of two alpha chains and two beta chains. In terms of tissue distribution, red blood cells.

Functionally, involved in oxygen transport from the lung to the various peripheral tissues. In Microtus xanthognathus (Yellow-cheeked vole), this protein is Hemoglobin subunit beta (HBB).